Reading from the N-terminus, the 440-residue chain is Thymidine phosphorylase (440 aa).

The protein belongs to the thymidine/pyrimidine-nucleoside phosphorylase family. As to quaternary structure, homodimer.

It catalyses the reaction thymidine + phosphate = 2-deoxy-alpha-D-ribose 1-phosphate + thymine. The protein operates within pyrimidine metabolism; dTMP biosynthesis via salvage pathway; dTMP from thymine: step 1/2. Its function is as follows. The enzymes which catalyze the reversible phosphorolysis of pyrimidine nucleosides are involved in the degradation of these compounds and in their utilization as carbon and energy sources, or in the rescue of pyrimidine bases for nucleotide synthesis. The protein is Thymidine phosphorylase of Shigella flexneri serotype 5b (strain 8401).